The sequence spans 260 residues: Hydroxyethylthiazole kinase 1 (260 aa).

Residue M39 coordinates substrate. 2 residues coordinate ATP: R115 and T160. Residue G187 participates in substrate binding.

The protein belongs to the Thz kinase family. Mg(2+) is required as a cofactor.

It catalyses the reaction 5-(2-hydroxyethyl)-4-methylthiazole + ATP = 4-methyl-5-(2-phosphooxyethyl)-thiazole + ADP + H(+). It functions in the pathway cofactor biosynthesis; thiamine diphosphate biosynthesis; 4-methyl-5-(2-phosphoethyl)-thiazole from 5-(2-hydroxyethyl)-4-methylthiazole: step 1/1. Functionally, catalyzes the phosphorylation of the hydroxyl group of 4-methyl-5-beta-hydroxyethylthiazole (THZ). This chain is Hydroxyethylthiazole kinase 1, found in Streptococcus pneumoniae (strain Taiwan19F-14).